A 260-amino-acid polypeptide reads, in one-letter code: Beta-lactamase SHV-6 (260 aa).

Residues 1–11 (LLATLPLAVHA) form the signal peptide. The Acyl-ester intermediate role is filled by Ser56. Cys63 and Cys109 are joined by a disulfide. Glu154 (proton acceptor) is an active-site residue. 220 to 222 (KTG) contacts substrate.

The protein belongs to the class-A beta-lactamase family.

The enzyme catalyses a beta-lactam + H2O = a substituted beta-amino acid. Its function is as follows. SHV enzymes hydrolyze broad spectrum cephalosporins notably cefotaxime and ceftazidime. The polypeptide is Beta-lactamase SHV-6 (bla) (Klebsiella pneumoniae).